The chain runs to 377 residues: L-arabinitol 4-dehydrogenase (377 aa).

Positions 66, 91, 92, 121, 124, 127, 135, and 176 each coordinate Zn(2+). NAD(+)-binding positions include 203 to 204 (PI), D224, R229, I296, and 320 to 322 (QYR).

The protein belongs to the zinc-containing alcohol dehydrogenase family. In terms of assembly, homotetramer. The cofactor is Zn(2+). Post-translationally, the N-terminus is blocked.

It catalyses the reaction L-arabinitol + NAD(+) = L-xylulose + NADH + H(+). Its pathway is carbohydrate degradation; L-arabinose degradation via L-arabinitol; D-xylulose 5-phosphate from L-arabinose (fungal route): step 2/5. Functionally, catalyzes the NAD-dependent oxidation of L-arabinitol to L-xylulose in the fungal L-arabinose catabolic pathway. L-arabinose catabolism is important for using plant material as a carbon source. Can partially compensate for xylitol dehydrogenase in xdh1 mutants. Also oxidizes galactitol to L-xylo-3-hexulose as an alternative to the standard Leloir pathway for D-galactose metabolism. NADP cannot act as a cosubstrate. The protein is L-arabinitol 4-dehydrogenase (lad1) of Hypocrea jecorina (Trichoderma reesei).